Consider the following 479-residue polypeptide: Splicing factor ESS-2 homolog (479 aa).

Met1 carries the post-translational modification N-acetylmethionine. Disordered stretches follow at residues 1 to 38 (MGTP…RSRQ) and 95 to 152 (GKIS…PSLD). A Phosphothreonine modification is found at Thr3. A compositionally biased stretch (low complexity) spans 7 to 19 (SAGALFLSSASAP). Positions 135–145 (DDGEAGEEEEK) are enriched in acidic residues. Lys145 participates in a covalent cross-link: Glycyl lysine isopeptide (Lys-Gly) (interchain with G-Cter in SUMO2). Residue Ser295 is modified to Phosphoserine. Thr389 bears the Phosphothreonine mark. A phosphoserine mark is found at Ser394 and Ser398. Positions 415-479 (RALRASYTPS…PARRKASDFF (65 aa)) are disordered. Residues 433–454 (TPAGGPQTPTSTPAPGSATRTP) show a composition bias toward low complexity. The span at 455–466 (LTQDPASITDNL) shows a compositional bias: polar residues.

Belongs to the ESS2 family. Identified in the spliceosome C complex. Interacts with FRA10AC1. In terms of tissue distribution, in the adult, widely expressed with highest expression in the testis and brain. Also widely expressed in the embryo with highest levels in the anterior pons.

The protein localises to the nucleus. Functionally, may be involved in pre-mRNA splicing. This is Splicing factor ESS-2 homolog (Ess2) from Mus musculus (Mouse).